A 266-amino-acid chain; its full sequence is Ankyrin repeat domain-containing protein 45 (266 aa).

2 stretches are compositionally biased toward acidic residues: residues 1 to 11 (MESEGPPESES) and 18 to 32 (QEEE…EPEE). The disordered stretch occupies residues 1–43 (MESEGPPESESSEFFSQQEEENEEEEAQEPEETGPKNPLLQPA). 2 ANK repeats span residues 76–105 (VGRN…NLNE) and 109–138 (RGYT…DIEA).

It is found in the cytoplasm. It localises to the midbody. The protein localises to the midbody ring. The protein resides in the cleavage furrow. In terms of biological role, may play a role during cell division. The polypeptide is Ankyrin repeat domain-containing protein 45 (Homo sapiens (Human)).